The following is a 182-amino-acid chain: Lipid A acyltransferase PagP (182 aa).

The signal sequence occupies residues 1-21 (MTQYFRSLAFFLLPVPATAMA). C22 carries N-palmitoyl cysteine lipidation. C22 carries S-diacylglycerol cysteine lipidation. Active-site residues include H55, D98, and S99.

Belongs to the lipid A palmitoyltransferase family. In terms of assembly, homodimer.

It is found in the cell outer membrane. It carries out the reaction a lipid A + a 1,2-diacyl-sn-glycero-3-phosphocholine = a hepta-acyl lipid A + a 2-acyl-sn-glycero-3-phosphocholine. The enzyme catalyses a lipid IVA + a 1,2-diacyl-sn-glycero-3-phosphocholine = a lipid IVB + a 2-acyl-sn-glycero-3-phosphocholine. The catalysed reaction is a lipid IIA + a 1,2-diacyl-sn-glycero-3-phosphocholine = a lipid IIB + a 2-acyl-sn-glycero-3-phosphocholine. Its function is as follows. Transfers a fatty acid residue from the sn-1 position of a phospholipid to the N-linked hydroxyfatty acid chain on the proximal unit of lipid A or its precursors. This is Lipid A acyltransferase PagP from Bordetella pertussis (strain CS).